We begin with the raw amino-acid sequence, 89 residues long: Small ribosomal subunit protein uS15 (89 aa).

This sequence belongs to the universal ribosomal protein uS15 family. As to quaternary structure, part of the 30S ribosomal subunit. Forms a bridge to the 50S subunit in the 70S ribosome, contacting the 23S rRNA.

In terms of biological role, one of the primary rRNA binding proteins, it binds directly to 16S rRNA where it helps nucleate assembly of the platform of the 30S subunit by binding and bridging several RNA helices of the 16S rRNA. Its function is as follows. Forms an intersubunit bridge (bridge B4) with the 23S rRNA of the 50S subunit in the ribosome. This chain is Small ribosomal subunit protein uS15, found in Zymomonas mobilis subsp. mobilis (strain ATCC 31821 / ZM4 / CP4).